Reading from the N-terminus, the 76-residue chain is MAKVDIDIVDFEYIEEIIRNRYPELSITSIHDDPNYCNXXIVIEGPLEDLTRFMANEYCDGMDSEDAEFYMGLIEQ.

This is an uncharacterized protein from Enterobacteria phage LZ3 (Bacteriophage LZ3).